Reading from the N-terminus, the 193-residue chain is Protein GrpE (193 aa).

The interval 1-40 is disordered; it reads MTEENRPQPDQPELTVTSESSVQETGENKARTPEQEGEAM. Polar residues predominate over residues 14–25; the sequence is LTVTSESSVQET.

The protein belongs to the GrpE family. Homodimer.

It is found in the cytoplasm. Functionally, participates actively in the response to hyperosmotic and heat shock by preventing the aggregation of stress-denatured proteins, in association with DnaK and GrpE. It is the nucleotide exchange factor for DnaK and may function as a thermosensor. Unfolded proteins bind initially to DnaJ; upon interaction with the DnaJ-bound protein, DnaK hydrolyzes its bound ATP, resulting in the formation of a stable complex. GrpE releases ADP from DnaK; ATP binding to DnaK triggers the release of the substrate protein, thus completing the reaction cycle. Several rounds of ATP-dependent interactions between DnaJ, DnaK and GrpE are required for fully efficient folding. This Nitrosospira multiformis (strain ATCC 25196 / NCIMB 11849 / C 71) protein is Protein GrpE.